Reading from the N-terminus, the 137-residue chain is Bet1-like protein At4g14600 (137 aa).

The Cytoplasmic portion of the chain corresponds to 1-113 (MASNPHRSGA…MSIIRSGNNH (113 aa)). The region spanning 43-105 (DPMHSDLDDE…KNNIRKLNMS (63 aa)) is the t-SNARE coiled-coil homology domain. Residues 114-134 (IMHVVLFALLVFFVLYIWSKM) form a helical; Anchor for type IV membrane protein membrane-spanning segment. The Vesicular segment spans residues 135–137 (FKR).

It belongs to the BET1 family.

It localises to the golgi apparatus membrane. Its subcellular location is the endoplasmic reticulum membrane. Its function is as follows. Required for vesicular transport from the ER to the Golgi complex. Functions as a SNARE associated with ER-derived vesicles. The protein is Bet1-like protein At4g14600 of Arabidopsis thaliana (Mouse-ear cress).